The chain runs to 216 residues: Probable GTP-binding protein EngB (216 aa).

One can recognise an EngB-type G domain in the interval 27-201 (EGIEVAFAGR…SQKLNTWFNE (175 aa)). GTP contacts are provided by residues 35–42 (GRSNAGKS), 62–66 (GRTQL), 80–83 (DLPG), 147–150 (TKAD), and 180–182 (FSS). Positions 42 and 64 each coordinate Mg(2+).

The protein belongs to the TRAFAC class TrmE-Era-EngA-EngB-Septin-like GTPase superfamily. EngB GTPase family. Mg(2+) serves as cofactor.

Functionally, necessary for normal cell division and for the maintenance of normal septation. This is Probable GTP-binding protein EngB from Serratia proteamaculans (strain 568).